We begin with the raw amino-acid sequence, 326 residues long: Vestitone reductase (326 aa).

Residues glycine 12–glycine 18, arginine 37, and tyrosine 164 contribute to the NADP(+) site.

It belongs to the NAD(P)-dependent epimerase/dehydratase family. Dihydroflavonol-4-reductase subfamily. In terms of assembly, monomer. Detected in roots, and at lower levels in root nodules. Not detected in petioles, leaf and stem.

The enzyme catalyses a (3R,4R)-4,2'-dihydroxyisoflavan + NADP(+) = a (3R)-2'-hydroxyisoflavanone + NADPH + H(+). Its activity is regulated as follows. Inhibited by vestitone concentrations above 50 uM. Functionally, stereospecific enzyme that catalyzes the NADPH-dependent reduction of (3R)-vestitone to (3R,4R)-4'-methoxyisoflavan-2',4,7-triol (DMI). Has no activity with (3S)-vestitone. Catalyzes the penultimate step in the biosynthesis of the phytoalexin medicarpin, and thereby contributes to plant defense reactions. The protein is Vestitone reductase of Medicago sativa (Alfalfa).